Reading from the N-terminus, the 265-residue chain is Mlc titration factor A (265 aa).

Zn(2+) is bound by residues histidine 111, histidine 148, histidine 152, and glutamate 211.

It belongs to the MtfA family. As to quaternary structure, interacts with Mlc. Requires Zn(2+) as cofactor.

The protein localises to the cytoplasm. Functionally, involved in the modulation of the activity of the glucose-phosphotransferase system (glucose-PTS). Interacts with the transcriptional repressor Mlc, preventing its interaction with DNA and leading to the modulation of expression of genes regulated by Mlc, including ptsG, which encodes the PTS system glucose-specific EIICB component. In terms of biological role, shows zinc-dependent metallopeptidase activity. The chain is Mlc titration factor A from Escherichia coli O127:H6 (strain E2348/69 / EPEC).